The following is a 122-amino-acid chain: Large ribosomal subunit protein bL12 (122 aa).

Belongs to the bacterial ribosomal protein bL12 family. In terms of assembly, homodimer. Part of the ribosomal stalk of the 50S ribosomal subunit. Forms a multimeric L10(L12)X complex, where L10 forms an elongated spine to which 2 to 4 L12 dimers bind in a sequential fashion. Binds GTP-bound translation factors.

Forms part of the ribosomal stalk which helps the ribosome interact with GTP-bound translation factors. Is thus essential for accurate translation. The sequence is that of Large ribosomal subunit protein bL12 from Lacticaseibacillus casei (strain BL23) (Lactobacillus casei).